Consider the following 331-residue polypeptide: UDP-N-acetylenolpyruvoylglucosamine reductase (331 aa).

In terms of domain architecture, FAD-binding PCMH-type spans 54–221 (RVGGAAELYV…TQATFQLQPG (168 aa)). Arg-200 is an active-site residue. The active-site Proton donor is the Ser-251. Residue Glu-321 is part of the active site.

This sequence belongs to the MurB family. The cofactor is FAD.

The protein resides in the cytoplasm. The enzyme catalyses UDP-N-acetyl-alpha-D-muramate + NADP(+) = UDP-N-acetyl-3-O-(1-carboxyvinyl)-alpha-D-glucosamine + NADPH + H(+). The protein operates within cell wall biogenesis; peptidoglycan biosynthesis. Its function is as follows. Cell wall formation. The sequence is that of UDP-N-acetylenolpyruvoylglucosamine reductase from Trichormus variabilis (strain ATCC 29413 / PCC 7937) (Anabaena variabilis).